The sequence spans 607 residues: All-trans-retinol 13,14-reductase (607 aa).

A signal peptide spans 1 to 22; that stretch reads MWFAVVAIFLALVAFLYRYVVG.

The protein belongs to the carotenoid/retinoid oxidoreductase family. CrtISO subfamily. Requires NAD(+) as cofactor. It depends on NADP(+) as a cofactor. FAD is required as a cofactor.

The protein resides in the endoplasmic reticulum membrane. It carries out the reaction all-trans-13,14-dihydroretinol + A = all-trans-retinol + AH2. Catalyzes the saturation of all-trans-retinol to all-trans-13,14-dihydroretinol. In addition, saturates the 7-8 double bond of all-trans-retinol to produce all-trans-7,8-dihydroretinol. Can also use vitamin A2 (all-trans-3,4-didehydroretinol) as a substrate, to produce all-trans-13,14-dihydro-3,4-didehydroretinol or all-trans-7,8-dihydro-3,4-didehydroretinol. May play a role in vitamin A metabolism. This is All-trans-retinol 13,14-reductase from Danio rerio (Zebrafish).